The primary structure comprises 73 residues: Structural DNA-binding protein p10 (73 aa).

The tract at residues 1-35 is disordered; it reads MPTKAGTKSTAHKKTTTKGPSKSPKGKTHATALHQ.

The protein belongs to the asfivirus P10 family.

The protein localises to the virion. Its function is as follows. May play a role in genome packaging through direct interaction with viral DNA. Binds to ssDNA and dsDNA with the same apparent affinity in vitro. This is Structural DNA-binding protein p10 from African swine fever virus (isolate Tick/Malawi/Lil 20-1/1983) (ASFV).